The chain runs to 765 residues: LPS-assembly protein LptD (765 aa).

The N-terminal stretch at Met1 to Ala18 is a signal peptide.

It belongs to the LptD family. As to quaternary structure, component of the lipopolysaccharide transport and assembly complex. Interacts with LptE and LptA.

It is found in the cell outer membrane. Together with LptE, is involved in the assembly of lipopolysaccharide (LPS) at the surface of the outer membrane. The polypeptide is LPS-assembly protein LptD (Shewanella oneidensis (strain ATCC 700550 / JCM 31522 / CIP 106686 / LMG 19005 / NCIMB 14063 / MR-1)).